Here is a 500-residue protein sequence, read N- to C-terminus: Protein nucleotidyltransferase YdiU (500 aa).

Residues Gly96, Gly98, Arg99, Lys119, Asp131, Gly132, Arg182, and Arg189 each contribute to the ATP site. Asp258 (proton acceptor) is an active-site residue. Residues Asn259 and Asp268 each coordinate Mg(2+). Asp268 provides a ligand contact to ATP.

This sequence belongs to the SELO family. Mg(2+) is required as a cofactor. Mn(2+) serves as cofactor.

The catalysed reaction is L-seryl-[protein] + ATP = 3-O-(5'-adenylyl)-L-seryl-[protein] + diphosphate. The enzyme catalyses L-threonyl-[protein] + ATP = 3-O-(5'-adenylyl)-L-threonyl-[protein] + diphosphate. It carries out the reaction L-tyrosyl-[protein] + ATP = O-(5'-adenylyl)-L-tyrosyl-[protein] + diphosphate. It catalyses the reaction L-histidyl-[protein] + UTP = N(tele)-(5'-uridylyl)-L-histidyl-[protein] + diphosphate. The catalysed reaction is L-seryl-[protein] + UTP = O-(5'-uridylyl)-L-seryl-[protein] + diphosphate. The enzyme catalyses L-tyrosyl-[protein] + UTP = O-(5'-uridylyl)-L-tyrosyl-[protein] + diphosphate. Nucleotidyltransferase involved in the post-translational modification of proteins. It can catalyze the addition of adenosine monophosphate (AMP) or uridine monophosphate (UMP) to a protein, resulting in modifications known as AMPylation and UMPylation. This Rhizobium johnstonii (strain DSM 114642 / LMG 32736 / 3841) (Rhizobium leguminosarum bv. viciae) protein is Protein nucleotidyltransferase YdiU.